Here is a 463-residue protein sequence, read N- to C-terminus: Asparagine--tRNA ligase (463 aa).

Belongs to the class-II aminoacyl-tRNA synthetase family. As to quaternary structure, homodimer.

It localises to the cytoplasm. The catalysed reaction is tRNA(Asn) + L-asparagine + ATP = L-asparaginyl-tRNA(Asn) + AMP + diphosphate + H(+). This chain is Asparagine--tRNA ligase, found in Alkaliphilus oremlandii (strain OhILAs) (Clostridium oremlandii (strain OhILAs)).